The following is a 348-amino-acid chain: Nicotinate-nucleotide--dimethylbenzimidazole phosphoribosyltransferase (348 aa).

E316 acts as the Proton acceptor in catalysis.

It belongs to the CobT family.

It catalyses the reaction 5,6-dimethylbenzimidazole + nicotinate beta-D-ribonucleotide = alpha-ribazole 5'-phosphate + nicotinate + H(+). It functions in the pathway nucleoside biosynthesis; alpha-ribazole biosynthesis; alpha-ribazole from 5,6-dimethylbenzimidazole: step 1/2. In terms of biological role, catalyzes the synthesis of alpha-ribazole-5'-phosphate from nicotinate mononucleotide (NAMN) and 5,6-dimethylbenzimidazole (DMB). The sequence is that of Nicotinate-nucleotide--dimethylbenzimidazole phosphoribosyltransferase from Xanthomonas campestris pv. campestris (strain B100).